Consider the following 199-residue polypeptide: Ribonuclease HI (199 aa).

The tract at residues 1–68 (MPVVECDIQT…TAVVQPDRGG (68 aa)) is not required for RNase H activity. In terms of domain architecture, RNase H type-1 spans 66 to 197 (RGGRVHAYFD…ADALANEALD (132 aa)). Residues 69–199 (RVHAYFDGAS…ALANEALDDA (131 aa)) form an as active as intact RNase H region. Mg(2+) contacts are provided by aspartate 75, glutamate 115, aspartate 139, and aspartate 189. Mn(2+)-binding residues include aspartate 75, glutamate 115, aspartate 139, and aspartate 189.

The protein belongs to the RNase H family. Mn(2+) is required as a cofactor. Requires Mg(2+) as cofactor. It depends on Co(2+) as a cofactor. Ni(2+) serves as cofactor.

The protein localises to the cytoplasm. The enzyme catalyses Endonucleolytic cleavage to 5'-phosphomonoester.. Functionally, nuclease that specifically degrades the RNA of RNA-DNA hybrids; seems to act exonucleolytically on RNA/DNA hybrids. Endonucleolytically removes RNA primers from the Okazaki fragments of lagging strand synthesis on its own. Complements the temperature-sensitive phenotype of an E.coli double rnhA/rnhB (RNase H) disruption mutant. This is Ribonuclease HI (rnhA) from Halobacterium salinarum (strain ATCC 700922 / JCM 11081 / NRC-1) (Halobacterium halobium).